A 404-amino-acid polypeptide reads, in one-letter code: Cysteine desulfurase IscS (404 aa).

Pyridoxal 5'-phosphate is bound by residues 75-76, asparagine 155, glutamine 183, and 203-205; these read AT and SGH. N6-(pyridoxal phosphate)lysine is present on lysine 206. Position 243 (threonine 243) interacts with pyridoxal 5'-phosphate. Catalysis depends on cysteine 328, which acts as the Cysteine persulfide intermediate. Cysteine 328 serves as a coordination point for [2Fe-2S] cluster.

This sequence belongs to the class-V pyridoxal-phosphate-dependent aminotransferase family. NifS/IscS subfamily. Homodimer. Forms a heterotetramer with IscU, interacts with other sulfur acceptors. Pyridoxal 5'-phosphate is required as a cofactor.

Its subcellular location is the cytoplasm. It catalyses the reaction (sulfur carrier)-H + L-cysteine = (sulfur carrier)-SH + L-alanine. It functions in the pathway cofactor biosynthesis; iron-sulfur cluster biosynthesis. Master enzyme that delivers sulfur to a number of partners involved in Fe-S cluster assembly, tRNA modification or cofactor biosynthesis. Catalyzes the removal of elemental sulfur atoms from cysteine to produce alanine. Functions as a sulfur delivery protein for Fe-S cluster synthesis onto IscU, an Fe-S scaffold assembly protein, as well as other S acceptor proteins. In Shewanella baltica (strain OS223), this protein is Cysteine desulfurase IscS.